Reading from the N-terminus, the 120-residue chain is uncharacterized protein (120 aa).

A VOC domain is found at 4 to 120 (QIGTVAVYVE…EDGNVFLLKE (117 aa)).

This is an uncharacterized protein from Bacillus subtilis (strain 168).